The chain runs to 715 residues: MEARSMLVPPQASVCFEDVAMAFTQEEWEQLDLAQRTLYREVTLETWEHIVSLGLFLSKSDVISQLEQEEDLCRAEQEAPRDWKATLEENRLNSEKDRAREELSHHVEVYRSGPEEPPSLVLGKVQDQSNQLREHQENSLRFMVLTSERLFAQREHCELELGGGYSLPSTLSLLPTTLPTSTGFPKPNSQVKELKQNSAFINHEKNGADGKHCESHQCARAFCQSIYLSKLGNVETGKKNPYEYIVSGDSLNYGSSLCFHGRTFSVKKSDDCKDYGNLFSHSVSLNEQKPVHFGKSQYECDECRETCSESLCLVQTERSGPGETPFRCEERCAAFPMASSFSDCNIIQTTEKPSVCNQCGKSFSCCKLIHQRTHTGEKPFECTQCGKSFSQSYDLVIHQRTHTGEKPYECDLCGKSFTQRSKLITHQRIHTGEKPYQCIECRKSFRWNSNLIVHQRIHTGEKPYECTHCGKSFSQSYELVTHKRTHTGEKPFKCTQCGKSFSQKYDLVVHQRTHTGEKPYECNLCGKSFSQSSKLITHQRIHTGEKPYQCIECGKSFRWNSNLVIHQRIHTGEKPYDCTHCGKSFSQSYQLVAHKRTHTGEKPYECNECGKAFNRSTQLIRHLQIHTGEKPYKCNQCNKAFARSSYLVMHQRTHTGEKPFECSQCGKAFSGSSNLLSHHRIHSGEKPYECSDCGKSFRQQSQLVVHRRTHTGEKP.

The KRAB domain maps to Val-14–Ala-85. Residues Lys-273 and Lys-289 each participate in a glycyl lysine isopeptide (Lys-Gly) (interchain with G-Cter in SUMO2) cross-link. The C2H2-type 1; atypical zinc-finger motif lies at Ser-354–His-374. 12 C2H2-type zinc fingers span residues Phe-380 to His-402, Tyr-408 to His-430, Tyr-436 to His-458, Tyr-464 to His-486, Phe-492 to His-514, Tyr-520 to His-542, Tyr-548 to His-570, Tyr-576 to His-598, Tyr-604 to His-626, Tyr-632 to His-654, Phe-660 to His-682, and Tyr-688 to His-710. Lys-534 participates in a covalent cross-link: Glycyl lysine isopeptide (Lys-Gly) (interchain with G-Cter in SUMO2).

The protein belongs to the krueppel C2H2-type zinc-finger protein family.

It localises to the nucleus. May be involved in transcriptional regulation. This is Zinc finger protein 544 (ZNF544) from Homo sapiens (Human).